The sequence spans 385 residues: MSNMQQTTGYVYANELLQYRFSNKHPFNQMRLKLTTELLMELGQLKQHHIISPRIATDDELSLIHAYDYIQAIRHASHGILSENEAKKYGLDGEDTLQFRMMHKHSARIVGGALNLADQIMSGTLTNGCHLGGGLHHSLPGRANGFCIYNDVAITISYLMQKYNQRVLCIDTDAHHGDGTQWSFYTNDQALIYSIHETGKFLFPGSGHYTERGAEKGFGYTVNIPLEPYTEDQSFLDVFKQTIEPVVASFKPDIIVSVHGVDVHYLDPLTHMSCTLNTLYEIPYIVKSLADTYTQGKVIMFGGGGYNIWKVVPRAWSHVFLALIGEQPPTGSLPERWLTKWQPYATCTLPTNWSDDKENYIEIPRRKEISEINMKQAQKVLSWFE.

It belongs to the histone deacetylase family.

It participates in ketone degradation; acetoin degradation. Its function is as follows. Role in growth on acetoin or butanediol. Involved in the breakdown of these compounds used as a carbon source. This is Acetoin utilization protein AcuC (acuC) from Staphylococcus xylosus.